The primary structure comprises 392 residues: ABSCISIC ACID-INSENSITIVE 5-like protein 4 (392 aa).

The interval 1–22 (MGTHIDINNLGGDTSRGNESKP) is disordered. A phosphoserine mark is found at Ser-28, Ser-50, and Ser-96. Thr-135 carries the phosphothreonine modification. The interval 266–297 (NMGGAGGTVTATSPGTSSAENNTWSSPVPYVF) is disordered. Positions 274–291 (VTATSPGTSSAENNTWSS) are enriched in polar residues. Residues 311-374 (VERRQKRMIK…NSELKEFSKQ (64 aa)) enclose the bZIP domain. The basic motif stretch occupies residues 313–332 (RRQKRMIKNRESAARSRARK). Residues 339–360 (LEAEIESLKLVNQDLQKKQAEI) are leucine-zipper.

This sequence belongs to the bZIP family. ABI5 subfamily. DNA-binding heterodimer. Interacts with ABI3 and the AFP proteins AFP1, AFP2, AFP3 and AFP4. In terms of processing, phosphorylated by CPK4, CPK11, SRK2D and SRK2I in vitro.

The protein resides in the nucleus. Its function is as follows. Binds to the ABA-responsive element (ABRE). Could participate in abscisic acid-regulated gene expression. This Arabidopsis thaliana (Mouse-ear cress) protein is ABSCISIC ACID-INSENSITIVE 5-like protein 4 (ABF1).